The following is a 94-amino-acid chain: Small polypeptide ROTUNDIFOLIA LIKE 1 (94 aa).

Polar residues predominate over residues Met1–Arg13. The segment at Met1–Arg26 is disordered. The interval Arg28–Lys59 is required for DVL/RTFL small polypeptide activity. Residues Ile63–Met82 form a helical membrane-spanning segment.

This sequence belongs to the DVL/RTFL small polypeptides family.

Its subcellular location is the cell membrane. In terms of biological role, small polypeptide acting as a regulatory molecule which coordinates cellular responses required for differentiation, growth and development, probably by restricting polar cell proliferation in lateral organs. The chain is Small polypeptide ROTUNDIFOLIA LIKE 1 from Oryza sativa subsp. japonica (Rice).